The chain runs to 338 residues: Lipoate-protein ligase A (338 aa).

Residues 29-216 (PATQRVLFLW…AFFAHYGERV (188 aa)) enclose the BPL/LPL catalytic domain. ATP is bound by residues arginine 71, 76–79 (GAVF), and lysine 134. Residue lysine 134 coordinates (R)-lipoate.

The protein belongs to the LplA family. Monomer.

The protein resides in the cytoplasm. It carries out the reaction L-lysyl-[lipoyl-carrier protein] + (R)-lipoate + ATP = N(6)-[(R)-lipoyl]-L-lysyl-[lipoyl-carrier protein] + AMP + diphosphate + H(+). It participates in protein modification; protein lipoylation via exogenous pathway; protein N(6)-(lipoyl)lysine from lipoate: step 1/2. It functions in the pathway protein modification; protein lipoylation via exogenous pathway; protein N(6)-(lipoyl)lysine from lipoate: step 2/2. Catalyzes both the ATP-dependent activation of exogenously supplied lipoate to lipoyl-AMP and the transfer of the activated lipoyl onto the lipoyl domains of lipoate-dependent enzymes. The sequence is that of Lipoate-protein ligase A from Escherichia coli (strain SMS-3-5 / SECEC).